The chain runs to 287 residues: ADP-dependent (S)-NAD(P)H-hydrate dehydratase (287 aa).

In terms of domain architecture, YjeF C-terminal spans 7-283 (TTALVKKFIP…PEISTVMKPF (277 aa)). 2 residues coordinate (6S)-NADPHX: Ala-42 and His-159. AMP contacts are provided by residues 196–200 (KGSTD) and Gly-224. Asp-225 contributes to the (6S)-NADPHX binding site.

This sequence belongs to the NnrD/CARKD family. As to quaternary structure, homotetramer. Requires Mg(2+) as cofactor.

The catalysed reaction is (6S)-NADHX + ADP = AMP + phosphate + NADH + H(+). It carries out the reaction (6S)-NADPHX + ADP = AMP + phosphate + NADPH + H(+). Its function is as follows. Catalyzes the dehydration of the S-form of NAD(P)HX at the expense of ADP, which is converted to AMP. Together with NAD(P)HX epimerase, which catalyzes the epimerization of the S- and R-forms, the enzyme allows the repair of both epimers of NAD(P)HX, a damaged form of NAD(P)H that is a result of enzymatic or heat-dependent hydration. The protein is ADP-dependent (S)-NAD(P)H-hydrate dehydratase of Nitrosopumilus maritimus (strain SCM1).